The following is a 113-amino-acid chain: Large ribosomal subunit protein uL24 (113 aa).

The protein belongs to the universal ribosomal protein uL24 family. Part of the 50S ribosomal subunit.

Its function is as follows. One of two assembly initiator proteins, it binds directly to the 5'-end of the 23S rRNA, where it nucleates assembly of the 50S subunit. Functionally, one of the proteins that surrounds the polypeptide exit tunnel on the outside of the subunit. The polypeptide is Large ribosomal subunit protein uL24 (Chlamydia felis (strain Fe/C-56) (Chlamydophila felis)).